The sequence spans 202 residues: Ribosomal RNA small subunit methyltransferase G (202 aa).

S-adenosyl-L-methionine-binding positions include glycine 75, phenylalanine 80, 125-126, and arginine 139; that span reads VQ.

This sequence belongs to the methyltransferase superfamily. RNA methyltransferase RsmG family.

The protein resides in the cytoplasm. Specifically methylates the N7 position of a guanine in 16S rRNA. The chain is Ribosomal RNA small subunit methyltransferase G from Mesomycoplasma hyopneumoniae (strain J / ATCC 25934 / NCTC 10110) (Mycoplasma hyopneumoniae).